The sequence spans 54 residues: Large ribosomal subunit protein bL33A (54 aa).

This sequence belongs to the bacterial ribosomal protein bL33 family.

The protein is Large ribosomal subunit protein bL33A of Streptomyces avermitilis (strain ATCC 31267 / DSM 46492 / JCM 5070 / NBRC 14893 / NCIMB 12804 / NRRL 8165 / MA-4680).